The sequence spans 117 residues: MTRVKRGYIARRRRTKIRLFASTFRGAHSRLTRTSTQQKMRALVSTHRDRGRQKRDFRRLWITRINAVTHENRVSYSYSRLIHDLYKKQLLLNRKILAQIAISNRNCLYTICNESIK.

This sequence belongs to the bacterial ribosomal protein bL20 family.

The protein localises to the plastid. It localises to the chloroplast. Its function is as follows. Binds directly to 23S ribosomal RNA and is necessary for the in vitro assembly process of the 50S ribosomal subunit. It is not involved in the protein synthesizing functions of that subunit. The protein is Large ribosomal subunit protein bL20c of Ceratophyllum demersum (Rigid hornwort).